The sequence spans 301 residues: Growth-regulating factor 2 (301 aa).

The QLQ domain maps to 11–46; it reads LFTATQWQELEHQALIYKYMAAGAPVPPDLLLHLRH. Short sequence motifs (bipartite nuclear localization signal) lie at residues 83–102 and 120–127; these read RRVE…KKWR and RGKNRSRK. Residues 87–131 enclose the WRC domain; it reads DPEPGRCRRTDGKKWRCSREAYGESKYCEKHMHRGKNRSRKPVEM.

It belongs to the GRF family.

The protein localises to the nucleus. Functionally, transcription activator that plays a regulatory role in gibberellin-induced stem elongation. In Oryza sativa subsp. japonica (Rice), this protein is Growth-regulating factor 2 (GRF2).